The primary structure comprises 336 residues: Cytoskeleton protein RodZ (336 aa).

The Cytoplasmic portion of the chain corresponds to 1–111 (MNTEATHDQN…LGKRRKKRDG (111 aa)). An HTH cro/C1-type domain is found at 19 to 71 (LRNAREQLGLSQQAVAERLCLKVSTVRDIEEDKAPADLASTFLRGYIRSYARL). A DNA-binding region (H-T-H motif) is located at residues 30-49 (QQAVAERLCLKVSTVRDIEE). A helical; Signal-anchor for type II membrane protein transmembrane segment spans residues 112-132 (WLMTFTWLVLFVVIGLSGAWW). Topologically, residues 133-336 (WQDHKAQQEE…TLNAEQSPAQ (204 aa)) are periplasmic. Residues 148–164 (DQSSAELNNNQSQSVPL) show a composition bias toward polar residues. Residues 148–248 (DQSSAELNNN…TDQAGVTTPA (101 aa)) form a disordered region. Residues 165–201 (DTSTTTDQAMATTPTSPVDTTATNTQTPAATTAPSPT) show a composition bias toward low complexity. Polar residues predominate over residues 202-217 (VDSQQNAVVPPSQANV). Low complexity predominate over residues 219 to 236 (TAATPAPAATTMPDGAAP).

The protein belongs to the RodZ family.

The protein resides in the cell inner membrane. Its function is as follows. Cytoskeletal protein that is involved in cell-shape control through regulation of the length of the long axis. In Escherichia coli (strain SMS-3-5 / SECEC), this protein is Cytoskeleton protein RodZ.